We begin with the raw amino-acid sequence, 144 residues long: MRLNTLSPAEGAKHAPKRVGRGIGSGLGKTAGRGHKGQNSRSGGGVRRGFEGGQMPLYRRLPKFGFTSRKAMITAEVRLSELALVEGDVIDLNTLKAANVVGTQIEFAKVMLSGEITRAVTLRGLRVTKGARAAIEAAGGKIEE.

The interval 1–52 (MRLNTLSPAEGAKHAPKRVGRGIGSGLGKTAGRGHKGQNSRSGGGVRRGFEG) is disordered. The segment covering 21–31 (RGIGSGLGKTA) has biased composition (gly residues).

This sequence belongs to the universal ribosomal protein uL15 family. Part of the 50S ribosomal subunit.

Binds to the 23S rRNA. The polypeptide is Large ribosomal subunit protein uL15 (Yersinia enterocolitica serotype O:8 / biotype 1B (strain NCTC 13174 / 8081)).